An 89-amino-acid polypeptide reads, in one-letter code: Omega-theraphotoxin-Ba1c (89 aa).

A signal peptide spans 1 to 23; it reads MRSLTLAAVLACSLLLVFHTSAA. A propeptide spanning residues 24-50 is cleaved from the precursor; sequence EEHEAQEGYLMNPGDTDTALATVDDER. Disulfide bonds link C54/C75, C58/C81, and C67/C86.

The protein belongs to the neurotoxin 12 (Hwtx-2) family. 06 (TXP1) subfamily. Expressed by the venom gland.

Its subcellular location is the secreted. Its function is as follows. Inhibits voltage-gated calcium channels (Cav) in rat cerebellar granule cells. Has insecticidal activity. This chain is Omega-theraphotoxin-Ba1c, found in Brachypelma albiceps (Mexican golden redrump tarantula).